The chain runs to 88 residues: Small ribosomal subunit protein uS17 (88 aa).

This sequence belongs to the universal ribosomal protein uS17 family. In terms of assembly, part of the 30S ribosomal subunit.

In terms of biological role, one of the primary rRNA binding proteins, it binds specifically to the 5'-end of 16S ribosomal RNA. The polypeptide is Small ribosomal subunit protein uS17 (Prochlorococcus marinus (strain MIT 9303)).